We begin with the raw amino-acid sequence, 377 residues long: Putative efflux system component YknX (377 aa).

Residues Lys3–Tyr23 form a helical membrane-spanning segment. Residues Thr95–Glu187 adopt a coiled-coil conformation.

Belongs to the membrane fusion protein (MFP) (TC 8.A.1) family. Part of a complex composed of YknX, YknY and YknZ. The complex interacts with YknW.

Its subcellular location is the cell membrane. Functionally, part of an unusual four-component transporter, which is required for protection against the killing factor SdpC (sporulation-delaying protein). In Bacillus subtilis (strain 168), this protein is Putative efflux system component YknX (yknX).